We begin with the raw amino-acid sequence, 242 residues long: ATP synthase subunit a (242 aa).

6 consecutive transmembrane segments (helical) span residues 29 to 49 (SAVAMIFVSIAASMLLITAFV), 84 to 104 (FFPLILTLFLFISLGNILGMV), 114 to 134 (IIVTFSLAMIVFTTTLVYGIY), 140 to 160 (FFSLFLPKNIPLWLAPIMVII), 181 to 201 (VAGHILLKIIAWSIVSLTWLF), and 206 to 226 (IALVIVLIGFELFISILQAYI).

The protein belongs to the ATPase A chain family. As to quaternary structure, F-type ATPases have 2 components, CF(1) - the catalytic core - and CF(0) - the membrane proton channel. CF(1) has five subunits: alpha(3), beta(3), gamma(1), delta(1), epsilon(1). CF(0) has three main subunits: a(1), b(2) and c(9-12). The alpha and beta chains form an alternating ring which encloses part of the gamma chain. CF(1) is attached to CF(0) by a central stalk formed by the gamma and epsilon chains, while a peripheral stalk is formed by the delta and b chains.

It is found in the cell inner membrane. In terms of biological role, key component of the proton channel; it plays a direct role in the translocation of protons across the membrane. This is ATP synthase subunit a from Orientia tsutsugamushi (strain Ikeda) (Rickettsia tsutsugamushi).